The following is a 419-amino-acid chain: Tyrosine--tRNA ligase (419 aa).

Tyr34 lines the L-tyrosine pocket. Positions 39–48 (PTADSLHIGN) match the 'HIGH' region motif. 2 residues coordinate L-tyrosine: Tyr169 and Gln173. The 'KMSKS' region motif lies at 230-234 (KFGKT). Lys233 lines the ATP pocket. Residues 352–419 (VPLVELLVSA…KKKYYLIRYA (68 aa)) form the S4 RNA-binding domain.

This sequence belongs to the class-I aminoacyl-tRNA synthetase family. TyrS type 1 subfamily. In terms of assembly, homodimer.

It localises to the cytoplasm. The catalysed reaction is tRNA(Tyr) + L-tyrosine + ATP = L-tyrosyl-tRNA(Tyr) + AMP + diphosphate + H(+). In terms of biological role, catalyzes the attachment of tyrosine to tRNA(Tyr) in a two-step reaction: tyrosine is first activated by ATP to form Tyr-AMP and then transferred to the acceptor end of tRNA(Tyr). In Geobacillus kaustophilus (strain HTA426), this protein is Tyrosine--tRNA ligase.